The primary structure comprises 352 residues: C-C chemokine receptor type 5 (352 aa).

Topologically, residues 1–30 (MDYQTSTPLYDIDYGMSEPCQKLNVRQIAA) are extracellular. Tyrosine 3 carries the post-translational modification Sulfotyrosine. O-linked (GalNAc...) serine glycosylation occurs at serine 6. A sulfotyrosine mark is found at tyrosine 10 and tyrosine 14. 2 disulfide bridges follow: cysteine 20–cysteine 269 and cysteine 101–cysteine 178. The helical transmembrane segment at 31-58 (RLLPPLYSLVFIFGFVGNMLVVLILINC) threads the bilayer. Residues 59-68 (KKLKSMTDIY) lie on the Cytoplasmic side of the membrane. Residues 69-89 (LLNLAISDLLFIITIPFWAHY) traverse the membrane as a helical segment. Over 90–102 (AADQWVFGNTMCQ) the chain is Extracellular. A helical membrane pass occupies residues 103 to 124 (LFTGFYFIGYFGGIFFIILLTI). Over 125 to 141 (DRYLAIVHAVFALKART) the chain is Cytoplasmic. Residues 142–166 (VTFGAATSVVTWVVAVFASLPGIIF) form a helical membrane-spanning segment. Topologically, residues 167–198 (TKSQKEGSRHTCSPHFPSSQYHFWKNFQTLKI) are extracellular. A helical transmembrane segment spans residues 199–218 (VILGLVLPLLVMIVCYSGII). Over 219–235 (KTLLRCRNEKKKHKAVR) the chain is Cytoplasmic. Residues 236–260 (LIFVIMIVYFLFWAPYNIVLLLSTF) traverse the membrane as a helical segment. At 261–277 (QEFFGLNNCSGSNRLDQ) the chain is on the extracellular side. Residues 278–301 (AMQVTETLGMTHCCINPIIYAFVG) traverse the membrane as a helical segment. Topologically, residues 302 to 352 (EKFRNYLLRFFRKYFASRFCKGCPVFQGEAPERVSSVYTRSTGEQEISVGL) are cytoplasmic. S-palmitoyl cysteine attachment occurs at residues cysteine 321 and cysteine 324. 4 positions are modified to phosphoserine; by BARK1: serine 336, serine 337, serine 342, and serine 349.

The protein belongs to the G-protein coupled receptor 1 family. As to quaternary structure, interacts with PRAF2. Efficient ligand binding to CCL3/MIP-1alpha and CCL4/MIP-1beta requires sulfation, O-glycosylation and sialic acid modifications. Glycosylation on Ser-6 is required for efficient binding of CCL4. Interacts with GRK2. Interacts with ARRB1 and ARRB2. Interacts with CNIH4. Interacts with S100A4; this interaction stimulates T-lymphocyte chemotaxis. Post-translationally, sulfated on at least 2 of the N-terminal tyrosines. Sulfation is required for efficient binding of the chemokines, CCL3 and CCL4. O-glycosylated, but not N-glycosylated. Ser-6 appears to be the major site. Also sialylated glycans present which contribute to chemokine binding. Ser-17 may also be glycosylated and, if so, with small moieties such as a T-antigen. In terms of processing, palmitoylation in the C-terminal is important for cell surface expression. Post-translationally, phosphorylation on serine residues in the C-terminal is stimulated by binding CC chemokines especially by APO-RANTES.

The protein localises to the cell membrane. Functionally, receptor for a number of inflammatory CC-chemokines including CCL3/MIP-1-alpha, CCL4/MIP-1-beta and RANTES and subsequently transduces a signal by increasing the intracellular calcium ion level. May play a role in the control of granulocytic lineage proliferation or differentiation. Participates in T-lymphocyte migration to the infection site by acting as a chemotactic receptor. The polypeptide is C-C chemokine receptor type 5 (CCR5) (Bos taurus (Bovine)).